We begin with the raw amino-acid sequence, 261 residues long: Phosphatidylglycerol--prolipoprotein diacylglyceryl transferase (261 aa).

Transmembrane regions (helical) follow at residues 20–40 (LAIH…VWLA), 54–74 (IIDF…LYYV), and 88–108 (IIAI…GAIV). Arg139 serves as a coordination point for a 1,2-diacyl-sn-glycero-3-phospho-(1'-sn-glycerol). Transmembrane regions (helical) follow at residues 175-195 (MPTF…VMVF) and 235-255 (ARVS…LFVY).

Belongs to the Lgt family.

It is found in the cell membrane. It carries out the reaction L-cysteinyl-[prolipoprotein] + a 1,2-diacyl-sn-glycero-3-phospho-(1'-sn-glycerol) = an S-1,2-diacyl-sn-glyceryl-L-cysteinyl-[prolipoprotein] + sn-glycerol 1-phosphate + H(+). Its pathway is protein modification; lipoprotein biosynthesis (diacylglyceryl transfer). Functionally, catalyzes the transfer of the diacylglyceryl group from phosphatidylglycerol to the sulfhydryl group of the N-terminal cysteine of a prolipoprotein, the first step in the formation of mature lipoproteins. The protein is Phosphatidylglycerol--prolipoprotein diacylglyceryl transferase of Lactococcus lactis subsp. cremoris (strain MG1363).